We begin with the raw amino-acid sequence, 276 residues long: Pantothenate synthetase (276 aa).

Position 27 to 34 (M27 to H34) interacts with ATP. Residue H34 is the Proton donor of the active site. Q58 provides a ligand contact to (R)-pantoate. Q58 lines the beta-alanine pocket. G147–D150 contacts ATP. Q153 is a binding site for (R)-pantoate. ATP contacts are provided by residues V176 and L184–R187.

Belongs to the pantothenate synthetase family. Homodimer.

The protein resides in the cytoplasm. The catalysed reaction is (R)-pantoate + beta-alanine + ATP = (R)-pantothenate + AMP + diphosphate + H(+). Its pathway is cofactor biosynthesis; (R)-pantothenate biosynthesis; (R)-pantothenate from (R)-pantoate and beta-alanine: step 1/1. Catalyzes the condensation of pantoate with beta-alanine in an ATP-dependent reaction via a pantoyl-adenylate intermediate. The chain is Pantothenate synthetase from Helicobacter pylori (strain G27).